The following is a 587-amino-acid chain: Putative inactive receptor-like protein kinase At1g64210 (587 aa).

The signal sequence occupies residues 1 to 19 (MQIFLFFFSLILCFVLISS). The Extracellular portion of the chain corresponds to 20 to 232 (QTLEDDKKAL…KTPFGLSQLA (213 aa)). Asn37 and Asn44 each carry an N-linked (GlcNAc...) asparagine glycan. LRR repeat units lie at residues 89–112 (SLKF…TNLK), 113–136 (SLTH…SELK), 137–160 (NLKV…SGLT), 161–183 (SLQV…HLPK), and 184–205 (LSQI…LQRF). 4 N-linked (GlcNAc...) asparagine glycosylation sites follow: Asn149, Asn169, Asn188, and Asn214. The chain crosses the membrane as a helical span at residues 233-253 (FLLILSAACVLCVSGLSFIMI). The Cytoplasmic portion of the chain corresponds to 254-587 (TCFGKTRISG…IEDIRSVDAE (334 aa)). A Protein kinase domain is found at 307 to 581 (SSSAEVLGKG…AQVLKLIEDI (275 aa)). Ser309 is subject to Phosphoserine. Residues 313-321 (LGKGAFGTT) and Lys335 each bind ATP. A Phosphoserine modification is found at Ser386. A phosphothreonine mark is found at Thr462, Thr463, Thr466, and Thr477.

It is found in the cell membrane. This is Putative inactive receptor-like protein kinase At1g64210 from Arabidopsis thaliana (Mouse-ear cress).